Reading from the N-terminus, the 419-residue chain is Menaquinone reductase, integral membrane subunit (419 aa).

The next 10 helical transmembrane spans lie at 23–43, 61–81, 98–118, 143–163, 176–196, 221–241, 270–290, 316–336, 341–361, and 383–403; these read LSKFMMWMAFVFVFFGWGLYA, FGFGLWITFDLAVIALGAGAF, IINLAVIIGFLCYSGAMLVLV, VIFCITCYCLVLIIEYVPLIL, AVAHNFHVMMPLFAGIGAFLS, FFIWPWTFFLYVLSAVGSGPV, IAGTMLMVYLIFKFADTYAWA, LWAELFYCGLVPAIILIVPAL, VLFYSAAILDCIGITINRYVM, and WAEWGASVMIVAYAALVLSLS.

It belongs to the NrfD family. The Qrc complex is composed of four subunits: QrcA, QrcB, QrcC and QrcD. Can form a supercomplex with the [NiFe] hydrogenase HynA1 and the tetraheme Type I cytochrome c3 TpIc(3), its physiological electron donors.

It localises to the cell inner membrane. In terms of biological role, component of the respiratory Qrc complex, that catalyzes the reduction of the menaquinone pool using electrons transferred from the reduced periplasmic cytochrome c3, and which is probably involved in sulfate respiration. Is likely essential for growth on H(2) or formate since the periplasmic hydrogenases and/or formate dehydrogenases act as primary electron donors for the Qrc complex. The QrcD subunit anchors the protein complex to the membrane and likely interacts with the quinone pool. The polypeptide is Menaquinone reductase, integral membrane subunit (Nitratidesulfovibrio vulgaris (strain ATCC 29579 / DSM 644 / CCUG 34227 / NCIMB 8303 / VKM B-1760 / Hildenborough) (Desulfovibrio vulgaris)).